The sequence spans 230 residues: Cytidylate kinase (230 aa).

12-20 provides a ligand contact to ATP; it reads GPSGAGKGT.

This sequence belongs to the cytidylate kinase family. Type 1 subfamily.

Its subcellular location is the cytoplasm. It carries out the reaction CMP + ATP = CDP + ADP. It catalyses the reaction dCMP + ATP = dCDP + ADP. This Shewanella baltica (strain OS223) protein is Cytidylate kinase.